Here is a 322-residue protein sequence, read N- to C-terminus: Acetyl-coenzyme A carboxylase carboxyl transferase subunit alpha (322 aa).

The CoA carboxyltransferase C-terminal domain maps to 30–293 (ALDISAEIAR…KQTLQESLRK (264 aa)).

The protein belongs to the AccA family. In terms of assembly, acetyl-CoA carboxylase is a heterohexamer composed of biotin carboxyl carrier protein (AccB), biotin carboxylase (AccC) and two subunits each of ACCase subunit alpha (AccA) and ACCase subunit beta (AccD).

The protein resides in the cytoplasm. It catalyses the reaction N(6)-carboxybiotinyl-L-lysyl-[protein] + acetyl-CoA = N(6)-biotinyl-L-lysyl-[protein] + malonyl-CoA. It functions in the pathway lipid metabolism; malonyl-CoA biosynthesis; malonyl-CoA from acetyl-CoA: step 1/1. Component of the acetyl coenzyme A carboxylase (ACC) complex. First, biotin carboxylase catalyzes the carboxylation of biotin on its carrier protein (BCCP) and then the CO(2) group is transferred by the carboxyltransferase to acetyl-CoA to form malonyl-CoA. The sequence is that of Acetyl-coenzyme A carboxylase carboxyl transferase subunit alpha from Nitrosomonas europaea (strain ATCC 19718 / CIP 103999 / KCTC 2705 / NBRC 14298).